The sequence spans 582 residues: ATP-dependent lipid A-core flippase (582 aa).

Transmembrane regions (helical) follow at residues 26–46, 68–88, 140–160, 164–184, and 252–272; these read LIAA…LIYL, ILVM…SYCL, YVLV…AVMV, WQLS…ISIV, and GLVQ…ATFP. The 284-residue stretch at 27–310 folds into the ABC transmembrane type-1 domain; the sequence is IAASVALILN…LTSVNSQFQR (284 aa). The region spanning 342 to 578 is the ABC transporter domain; it reads ITFDNVIFSY…GGAYKQLYSM (237 aa). An ATP-binding site is contributed by 376–383; that stretch reads GRSGSGKS.

This sequence belongs to the ABC transporter superfamily. Lipid exporter (TC 3.A.1.106) family. Homodimer.

The protein resides in the cell inner membrane. The enzyme catalyses ATP + H2O + lipid A-core oligosaccharideSide 1 = ADP + phosphate + lipid A-core oligosaccharideSide 2.. Functionally, involved in lipopolysaccharide (LPS) biosynthesis. Translocates lipid A-core from the inner to the outer leaflet of the inner membrane. Transmembrane domains (TMD) form a pore in the inner membrane and the ATP-binding domain (NBD) is responsible for energy generation. This Haemophilus ducreyi (strain 35000HP / ATCC 700724) protein is ATP-dependent lipid A-core flippase.